Here is a 293-residue protein sequence, read N- to C-terminus: Glutamyl-Q tRNA(Asp) synthetase (293 aa).

L-glutamate is bound by residues 8-12 (RFAPT) and Glu44. Residues 11–21 (PTPSGYLHFGS) carry the 'HIGH' region motif. Zn(2+) is bound by residues Cys100, Cys102, Tyr114, and Cys118. L-glutamate is bound by residues Tyr171 and Arg189. Positions 227 to 231 (KLGKS) match the 'KMSKS' region motif. ATP is bound at residue Lys230.

This sequence belongs to the class-I aminoacyl-tRNA synthetase family. GluQ subfamily. Zn(2+) serves as cofactor.

Catalyzes the tRNA-independent activation of glutamate in presence of ATP and the subsequent transfer of glutamate onto a tRNA(Asp). Glutamate is transferred on the 2-amino-5-(4,5-dihydroxy-2-cyclopenten-1-yl) moiety of the queuosine in the wobble position of the QUC anticodon. This chain is Glutamyl-Q tRNA(Asp) synthetase, found in Pseudomonas aeruginosa (strain ATCC 15692 / DSM 22644 / CIP 104116 / JCM 14847 / LMG 12228 / 1C / PRS 101 / PAO1).